A 573-amino-acid chain; its full sequence is Amino-acid permease inda1 (573 aa).

11 helical membrane passes run 72-92 (MIAI…GALA), 99-117 (LFVD…VYAL), 176-200 (ITTA…ALGY), 212-229 (LAAT…VLGG), 257-280 (GFCS…LAAA), 296-315 (VFWR…GLLI), 351-371 (FMNL…VYGG), 398-415 (LPSV…YVSL), 425-444 (WLLA…VCLA), 470-494 (VYGS…AIAA), and 511-527 (YLAA…GWLW).

This sequence belongs to the amino acid-polyamine-organocation (APC) superfamily.

The protein localises to the membrane. This Hypocrea atroviridis (Trichoderma atroviride) protein is Amino-acid permease inda1 (inda1).